Here is a 324-residue protein sequence, read N- to C-terminus: Glycerol-3-phosphate dehydrogenase [NAD(P)+] (324 aa).

Positions 11, 31, and 107 each coordinate NADPH. The sn-glycerol 3-phosphate site is built by Lys107 and Gly135. Ala139 lines the NADPH pocket. Lys190, Asp245, Ser255, Arg256, and Asn257 together coordinate sn-glycerol 3-phosphate. Lys190 functions as the Proton acceptor in the catalytic mechanism. Arg256 serves as a coordination point for NADPH. Val278 and Glu279 together coordinate NADPH.

It belongs to the NAD-dependent glycerol-3-phosphate dehydrogenase family.

The protein resides in the cytoplasm. It catalyses the reaction sn-glycerol 3-phosphate + NAD(+) = dihydroxyacetone phosphate + NADH + H(+). The catalysed reaction is sn-glycerol 3-phosphate + NADP(+) = dihydroxyacetone phosphate + NADPH + H(+). The protein operates within membrane lipid metabolism; glycerophospholipid metabolism. Its function is as follows. Catalyzes the reduction of the glycolytic intermediate dihydroxyacetone phosphate (DHAP) to sn-glycerol 3-phosphate (G3P), the key precursor for phospholipid synthesis. The polypeptide is Glycerol-3-phosphate dehydrogenase [NAD(P)+] (Anaplasma phagocytophilum (strain HZ)).